The chain runs to 133 residues: UPF0146 protein MTH_1000 (133 aa).

It belongs to the UPF0146 family.

This is UPF0146 protein MTH_1000 from Methanothermobacter thermautotrophicus (strain ATCC 29096 / DSM 1053 / JCM 10044 / NBRC 100330 / Delta H) (Methanobacterium thermoautotrophicum).